The following is a 490-amino-acid chain: Cytochrome P450 2C1 (490 aa).

Heme is bound at residue Cys-435.

Belongs to the cytochrome P450 family. Heme is required as a cofactor.

The protein resides in the endoplasmic reticulum membrane. Its subcellular location is the microsome membrane. It carries out the reaction an organic molecule + reduced [NADPH--hemoprotein reductase] + O2 = an alcohol + oxidized [NADPH--hemoprotein reductase] + H2O + H(+). Functionally, cytochromes P450 are a group of heme-thiolate monooxygenases. In liver microsomes, this enzyme is involved in an NADPH-dependent electron transport pathway. It oxidizes a variety of structurally unrelated compounds, including steroids, fatty acids, and xenobiotics. This is Cytochrome P450 2C1 (CYP2C1) from Oryctolagus cuniculus (Rabbit).